The sequence spans 290 residues: METVLDSNILPVGKPKWLKVKLPIGQKYTELRGLVDKYKLNTICTSGSCPNMGECWGEGTATFMILGNICTRSCGFCGVKTGRPETVDWDEPEKVARSIKIMNIKHAVITSVDRDDLKDMGSIIWIETVKAIRRMNPETTLETLIPDFQGVERNLDRIVAANPEVVSHNVETVRRLTREVRIQAKYDKSLEVLRYLKAKGIKRTKSGIMLGLGETEEEVIQTMRDLREANVDIVTIGQYLQPSKKHLPVKEFITPEQFEKYELLGKEMGFRHVESGPLVRSSYHAQKHIL.

Cys44, Cys49, Cys55, Cys70, Cys74, Cys77, and Ser282 together coordinate [4Fe-4S] cluster. Residues 56 to 271 form the Radical SAM core domain; it reads WGEGTATFMI…ELLGKEMGFR (216 aa).

Belongs to the radical SAM superfamily. Lipoyl synthase family. The cofactor is [4Fe-4S] cluster.

Its subcellular location is the cytoplasm. It carries out the reaction [[Fe-S] cluster scaffold protein carrying a second [4Fe-4S](2+) cluster] + N(6)-octanoyl-L-lysyl-[protein] + 2 oxidized [2Fe-2S]-[ferredoxin] + 2 S-adenosyl-L-methionine + 4 H(+) = [[Fe-S] cluster scaffold protein] + N(6)-[(R)-dihydrolipoyl]-L-lysyl-[protein] + 4 Fe(3+) + 2 hydrogen sulfide + 2 5'-deoxyadenosine + 2 L-methionine + 2 reduced [2Fe-2S]-[ferredoxin]. It functions in the pathway protein modification; protein lipoylation via endogenous pathway; protein N(6)-(lipoyl)lysine from octanoyl-[acyl-carrier-protein]: step 2/2. In terms of biological role, catalyzes the radical-mediated insertion of two sulfur atoms into the C-6 and C-8 positions of the octanoyl moiety bound to the lipoyl domains of lipoate-dependent enzymes, thereby converting the octanoylated domains into lipoylated derivatives. This is Lipoyl synthase from Flavobacterium psychrophilum (strain ATCC 49511 / DSM 21280 / CIP 103535 / JIP02/86).